The following is a 208-amino-acid chain: Outer-membrane lipoprotein carrier protein (208 aa).

The N-terminal stretch at 1-24 (MRMNIVQKILSATCFALLPLLAHA) is a signal peptide.

The protein belongs to the LolA family. Monomer.

The protein localises to the periplasm. Functionally, participates in the translocation of lipoproteins from the inner membrane to the outer membrane. Only forms a complex with a lipoprotein if the residue after the N-terminal Cys is not an aspartate (The Asp acts as a targeting signal to indicate that the lipoprotein should stay in the inner membrane). This chain is Outer-membrane lipoprotein carrier protein, found in Dechloromonas aromatica (strain RCB).